We begin with the raw amino-acid sequence, 118 residues long: Holo-[acyl-carrier-protein] synthase (118 aa).

Residues aspartate 9 and glutamate 52 each coordinate Mg(2+).

The protein belongs to the P-Pant transferase superfamily. AcpS family. The cofactor is Mg(2+).

The protein resides in the cytoplasm. It catalyses the reaction apo-[ACP] + CoA = holo-[ACP] + adenosine 3',5'-bisphosphate + H(+). Functionally, transfers the 4'-phosphopantetheine moiety from coenzyme A to a Ser of acyl-carrier-protein. The protein is Holo-[acyl-carrier-protein] synthase of Frankia casuarinae (strain DSM 45818 / CECT 9043 / HFP020203 / CcI3).